The sequence spans 342 residues: Probable dual-specificity RNA methyltransferase RlmN (342 aa).

The active-site Proton acceptor is the Glu-91. The 231-residue stretch at Tyr-97–Asp-327 folds into the Radical SAM core domain. Cys-104 and Cys-332 form a disulfide bridge. Positions 111, 115, and 118 each coordinate [4Fe-4S] cluster. S-adenosyl-L-methionine contacts are provided by residues Gly-158 to Glu-159, Ser-190, Ser-213 to His-215, and Asn-289. The S-methylcysteine intermediate role is filled by Cys-332.

The protein belongs to the radical SAM superfamily. RlmN family. [4Fe-4S] cluster serves as cofactor.

Its subcellular location is the cytoplasm. It catalyses the reaction adenosine(2503) in 23S rRNA + 2 reduced [2Fe-2S]-[ferredoxin] + 2 S-adenosyl-L-methionine = 2-methyladenosine(2503) in 23S rRNA + 5'-deoxyadenosine + L-methionine + 2 oxidized [2Fe-2S]-[ferredoxin] + S-adenosyl-L-homocysteine. The enzyme catalyses adenosine(37) in tRNA + 2 reduced [2Fe-2S]-[ferredoxin] + 2 S-adenosyl-L-methionine = 2-methyladenosine(37) in tRNA + 5'-deoxyadenosine + L-methionine + 2 oxidized [2Fe-2S]-[ferredoxin] + S-adenosyl-L-homocysteine. Functionally, specifically methylates position 2 of adenine 2503 in 23S rRNA and position 2 of adenine 37 in tRNAs. This Clostridium botulinum (strain Okra / Type B1) protein is Probable dual-specificity RNA methyltransferase RlmN.